The chain runs to 1493 residues: Mitogen-activated protein kinase kinase kinase 1 (1493 aa).

Low complexity-rich tracts occupy residues 1–23 (MAAAAGDRASSSGFPGAAAASPE) and 33–42 (GSGAPAAGAG). 2 disordered regions span residues 1–171 (MAAA…DRPE) and 222–295 (LQGE…EETS). At Ala2 the chain carries N-acetylalanine. Ser21 is subject to Phosphoserine. The span at 84–94 (PPCPSTSPSPE) shows a compositional bias: pro residues. Composition is skewed to low complexity over residues 95–108 (PADAAAGASGFQPA) and 135–151 (ARSPAGAEPPSAAAPSG). Ser137 carries the phosphoserine modification. Residues 152 to 171 (REMENKETLKGLHKMDDRPE) show a composition bias toward basic and acidic residues. Residues 230–257 (SAAPAPKGRRSPSPGSSPSGRSGKPESP) are compositionally biased toward low complexity. Ser265 carries the post-translational modification Phosphoserine. A Phosphothreonine modification is found at Thr275. 3 positions are modified to phosphoserine: Ser282, Ser287, and Ser290. An SWIM-type zinc finger spans residues 328–356 (YRVFIGPQNCSCGRGTFCIHLLFVMLRVF). The RING-type zinc finger occupies 433 to 482 (CPICLLGMLDEESLTVCEDGCRNKLHHHCMSIWAEECRRNREPLICPLCR). The span at 496–506 (SSPVDSPTSLR) shows a compositional bias: polar residues. Disordered regions lie at residues 496–524 (SSPVDSPTSLRGVQQPSSPQQPVAGSQRR), 866–910 (DTLD…LSAS), 923–955 (VGLPSSATTEQPKPTVQTKGRPHSQCLNSSPLS), and 992–1060 (PCKI…ASKN). Residues Ser497, Ser521, and Ser910 each carry the phosphoserine modification. Over residues 507 to 522 (GVQQPSSPQQPVAGSQ) the composition is skewed to low complexity. 2 stretches are compositionally biased toward polar residues: residues 925–940 (LPSSATTEQPKPTVQT) and 998–1014 (ASPQTQRKFSLQFQRTC). 2 positions are modified to phosphoserine: Ser999 and Ser1024. The span at 1049–1060 (GSTSKLGDASKN) shows a compositional bias: polar residues. The 266-residue stretch at 1224–1489 (WLKGQQIGLG…SRELLKHPVF (266 aa)) folds into the Protein kinase domain. ATP-binding positions include 1230 to 1238 (IGLGAFSSC) and Lys1253. The Proton acceptor role is filled by Asp1350. A phosphothreonine; by autocatalysis mark is found at Thr1381 and Thr1393.

This sequence belongs to the protein kinase superfamily. STE Ser/Thr protein kinase family. MAP kinase kinase kinase subfamily. In terms of assembly, binds both upstream activators and downstream substrates in multimolecular complexes through its N-terminus. Oligomerizes after binding MAP4K2 or TRAF2. Interacts (via the kinase catalytic domain) with STK38. Interacts with GRIPAP1. Mg(2+) is required as a cofactor. Autophosphorylated. In terms of tissue distribution, most highly expressed in spleen, kidney and lung.

Its subcellular location is the membrane. The enzyme catalyses L-seryl-[protein] + ATP = O-phospho-L-seryl-[protein] + ADP + H(+). It carries out the reaction L-threonyl-[protein] + ATP = O-phospho-L-threonyl-[protein] + ADP + H(+). Activated by autophosphorylation on Thr-1381 and Thr-1393 following oligomerization. Functionally, component of a protein kinase signal transduction cascade. Activates the ERK and JNK kinase pathways by phosphorylation of MAP2K1 and MAP2K4. May phosphorylate the MAPK8/JNK1 kinase. Activates CHUK and IKBKB, the central protein kinases of the NF-kappa-B pathway. The polypeptide is Mitogen-activated protein kinase kinase kinase 1 (Map3k1) (Rattus norvegicus (Rat)).